Reading from the N-terminus, the 191-residue chain is Potassium-transporting ATPase KdpC subunit (191 aa).

The helical transmembrane segment at 7 to 27 threads the bilayer; that stretch reads ASLVLFLSLTLLTGVAYPLLV.

It belongs to the KdpC family. The system is composed of three essential subunits: KdpA, KdpB and KdpC.

The protein localises to the cell inner membrane. In terms of biological role, part of the high-affinity ATP-driven potassium transport (or Kdp) system, which catalyzes the hydrolysis of ATP coupled with the electrogenic transport of potassium into the cytoplasm. This subunit acts as a catalytic chaperone that increases the ATP-binding affinity of the ATP-hydrolyzing subunit KdpB by the formation of a transient KdpB/KdpC/ATP ternary complex. In Methylibium petroleiphilum (strain ATCC BAA-1232 / LMG 22953 / PM1), this protein is Potassium-transporting ATPase KdpC subunit.